Consider the following 555-residue polypeptide: CTP synthase (555 aa).

The segment at 1 to 265 is amidoligase domain; the sequence is MTRYIFITGG…GNRVCEKLNI (265 aa). Residue Ser13 participates in CTP binding. UTP is bound at residue Ser13. ATP-binding positions include 14 to 19 and Asp71; that span reads SLGKGI. Asp71 and Glu139 together coordinate Mg(2+). CTP is bound by residues 146 to 148, 186 to 191, and Lys222; these read DIE and KTKPTQ. UTP contacts are provided by residues 186–191 and Lys222; that span reads KTKPTQ. Residues 290 to 541 enclose the Glutamine amidotransferase type-1 domain; it reads TVAVVGKYVD…IKAGLAAKEA (252 aa). Position 351 (Gly351) interacts with L-glutamine. Cys378 serves as the catalytic Nucleophile; for glutamine hydrolysis. L-glutamine contacts are provided by residues 379–382, Glu402, and Arg469; that span reads LGMQ. Active-site residues include His514 and Glu516.

This sequence belongs to the CTP synthase family. As to quaternary structure, homotetramer.

The enzyme catalyses UTP + L-glutamine + ATP + H2O = CTP + L-glutamate + ADP + phosphate + 2 H(+). It carries out the reaction L-glutamine + H2O = L-glutamate + NH4(+). The catalysed reaction is UTP + NH4(+) + ATP = CTP + ADP + phosphate + 2 H(+). It participates in pyrimidine metabolism; CTP biosynthesis via de novo pathway; CTP from UDP: step 2/2. Its activity is regulated as follows. Allosterically activated by GTP, when glutamine is the substrate; GTP has no effect on the reaction when ammonia is the substrate. The allosteric effector GTP functions by stabilizing the protein conformation that binds the tetrahedral intermediate(s) formed during glutamine hydrolysis. Inhibited by the product CTP, via allosteric rather than competitive inhibition. Catalyzes the ATP-dependent amination of UTP to CTP with either L-glutamine or ammonia as the source of nitrogen. Regulates intracellular CTP levels through interactions with the four ribonucleotide triphosphates. This Coxiella burnetii (strain CbuG_Q212) (Coxiella burnetii (strain Q212)) protein is CTP synthase.